A 262-amino-acid polypeptide reads, in one-letter code: Intercellular adhesion molecule 4 (262 aa).

The signal sequence occupies residues 1-22; the sequence is MESALLLPSLLLVAAYPRGGSP. At 23–231 the chain is on the extracellular side; sequence QQEWMQSPPA…LTVLALSPAS (209 aa). 2 Ig-like C2-type domains span residues 54 to 116 and 138 to 209; these read GGSA…TREA and GHKY…LNLD. N60, N84, and N182 each carry an N-linked (GlcNAc...) asparagine glycan. 4 cysteine pairs are disulfide-bonded: C61/C105, C61/C109, C65/C109, and C145/C202. A helical transmembrane segment spans residues 232–252; the sequence is IALASTSIATLVGILLAVGAV. Residues 253 to 262 lie on the Cytoplasmic side of the membrane; that stretch reads YVRKYLAVQT.

The protein belongs to the immunoglobulin superfamily. ICAM family.

The protein localises to the cell membrane. Its subcellular location is the secreted. Adhesion molecule that binds to leukocyte adhesion LFA-1 protein LFA-1 (integrin alpha-L/beta-2). ICAM4 is also a ligand for alpha-4/beta-1 and alpha-V integrins. Isoform 2 may modulate binding of membrane-associated ICAM4. This chain is Intercellular adhesion molecule 4 (Icam4), found in Mus musculus (Mouse).